A 201-amino-acid chain; its full sequence is Ribonuclease MRP protein subunit RMP1 (201 aa).

The chain crosses the membrane as a helical span at residues 86–108 (YWQFNGVIALGQFVTLGCTLVTL).

As to quaternary structure, component of RNase MRP complex which consists of an RNA moiety and at least 10 protein subunits including POP1, POP3, POP4, POP5, POP6, POP7, POP8, RMP1, RPP1 and SNM1, many of which are shared with the RNase P complex.

It is found in the membrane. The protein localises to the cytoplasm. It localises to the nucleus. Functionally, functions as part of ribonuclease MRP (RNase MRP), which is involved in rRNA processing in mitochondria. The chain is Ribonuclease MRP protein subunit RMP1 from Saccharomyces cerevisiae (strain ATCC 204508 / S288c) (Baker's yeast).